We begin with the raw amino-acid sequence, 491 residues long: Glutamate--tRNA ligase (491 aa).

Positions 13-23 match the 'HIGH' region motif; it reads PSPTGFLHIGN. 4 residues coordinate Zn(2+): C110, C112, C137, and H139. Residues 254-258 carry the 'KMSKS' region motif; that stretch reads KLSKR. Residue K257 participates in ATP binding.

The protein belongs to the class-I aminoacyl-tRNA synthetase family. Glutamate--tRNA ligase type 1 subfamily. In terms of assembly, monomer. Zn(2+) serves as cofactor.

The protein localises to the cytoplasm. It catalyses the reaction tRNA(Glu) + L-glutamate + ATP = L-glutamyl-tRNA(Glu) + AMP + diphosphate. Its function is as follows. Catalyzes the attachment of glutamate to tRNA(Glu) in a two-step reaction: glutamate is first activated by ATP to form Glu-AMP and then transferred to the acceptor end of tRNA(Glu). This is Glutamate--tRNA ligase from Listeria welshimeri serovar 6b (strain ATCC 35897 / DSM 20650 / CCUG 15529 / CIP 8149 / NCTC 11857 / SLCC 5334 / V8).